Consider the following 424-residue polypeptide: Spore coat protein SP60 (424 aa).

The first 23 residues, 1–23, serve as a signal peptide directing secretion; it reads MKILSLLVVGALCMGGKVYGEVN. Follistatin-like domains are found at residues 52 to 74, 85 to 109, 117 to 139, 184 to 206, 215 to 234, and 299 to 322; these read DCSTLQCPPRYHCEVNNGNRQCV, KCDNVHCPKGFNCKYDWEKDLALCV, VCRTRCPEGHECKVDEWGKECCV, ICRLRCPPGHECKHDEHGKECCV, DLKCKRGYECKIKHDGSKCC, and RCDDVECPDFHRCVERRGGILSCE. The tract at residues 330-424 is disordered; sequence RSLDWAENEN…FQDANDEWDY (95 aa). Composition is skewed to acidic residues over residues 335–357 and 365–424; these read AENENDDRDYDDRDYDDDEYDGD and YDGD…EWDY.

This chain is Spore coat protein SP60 (cotC), found in Dictyostelium discoideum (Social amoeba).